Reading from the N-terminus, the 88-residue chain is MSKLFFVVFLCLIISVFAISPADIGCTDISQADFDEKNNNCIKCGEDGFGEEMVNRCRDKCFTDNFYQSCVDLLNKVYEEKDTPPVQE.

A signal peptide spans 1 to 18 (MSKLFFVVFLCLIISVFA).

This sequence belongs to the arthropod CHH/MIH/GIH/VIH hormone family. Expressed by the venom gland.

It localises to the secreted. In terms of biological role, may increase the toxicity of alpha-latrotoxin and/or other venom components. Is non-toxic to mice and to the cockroach Periplaneta americana. This is Alpha-latrotoxin-associated low molecular weight protein from Latrodectus tredecimguttatus (Mediterranean black widow spider).